The following is a 220-amino-acid chain: Large ribosomal subunit protein uL1 (220 aa).

Belongs to the universal ribosomal protein uL1 family. As to quaternary structure, part of the 50S ribosomal subunit.

Functionally, binds directly to 23S rRNA. The L1 stalk is quite mobile in the ribosome, and is involved in E site tRNA release. Protein L1 is also a translational repressor protein, it controls the translation of the L11 operon by binding to its mRNA. The chain is Large ribosomal subunit protein uL1 from Ehrlichia canis (strain Jake).